The chain runs to 544 residues: Involucrin (544 aa).

Residues methionine 1–leucine 520 are disordered. Over residues glutamate 76 to histidine 90 the composition is skewed to low complexity. Basic and acidic residues-rich tracts occupy residues glutamate 96–glutamine 117, glutamate 124–leucine 152, glutamine 202–glutamate 234, glutamine 252–glycine 271, lysine 283–glutamine 297, glutamine 304–glutamine 347, glutamine 354–glutamine 411, lysine 423–glutamine 437, and lysine 462–glutamine 476. A compositionally biased stretch (low complexity) spans glutamine 477–leucine 494.

Belongs to the involucrin family. As to quaternary structure, directly or indirectly cross-linked to cornifelin (CNFN). Post-translationally, substrate of transglutaminase. Specific glutamines or lysines are cross-linked to keratins, desmoplakin and to inter involucrin molecules. In terms of tissue distribution, keratinocytes of epidermis and other stratified squamous epithelia.

The protein localises to the cytoplasm. Part of the insoluble cornified cell envelope (CE) of stratified squamous epithelia. In Aotus trivirgatus (Three-striped night monkey), this protein is Involucrin (IVL).